A 300-amino-acid chain; its full sequence is F-box/LRR-repeat protein 15 (300 aa).

M1 carries the post-translational modification N-acetylmethionine. The F-box domain occupies 19 to 66; sequence FLDLPWEDVLLPHVLNRVPLRQLLRLQRVSRAFRSLVQLHLAGLRRFD. An interaction with SMURF1 region spans residues 113 to 269; sequence NPQLRSVALG…ESSLSRLRKR (157 aa). LRR repeat units follow at residues 141–162, 167–188, 194–215, 220–241, and 246–267; these read RLQRLSLAHCDWVDGLALRGLA, ALEELDLTACRQLKDEAIVYLA, GLRSLSLAVNANVGDAAVQELA, ELHHLDLTGCLRVGSDGVRTLA, and VLRSLRVRHCHHVAESSLSRLR.

This sequence belongs to the FBXL15 family. In terms of assembly, part of the SCF (SKP1-CUL1-F-box) E3 ubiquitin-protein ligase complex SCF(FBXL15) composed of CUL1, SKP1, RBX1 and FBXL15.

The protein resides in the cytoplasm. It participates in protein modification; protein ubiquitination. Substrate recognition component of a SCF (SKP1-CUL1-F-box protein) E3 ubiquitin-protein ligase complex which mediates the ubiquitination and subsequent proteasomal degradation of SMURF1, thereby acting as a positive regulator of the BMP signaling pathway. Required for dorsal/ventral pattern formation and bone mass maintenance. Also mediates ubiquitination of SMURF2 and WWP2. The protein is F-box/LRR-repeat protein 15 (FBXL15) of Homo sapiens (Human).